The sequence spans 423 residues: Maltoporin 1 (423 aa).

The signal sequence occupies residues 1 to 23 (MNTTLRALSVALAAALIAPSAFA).

This sequence belongs to the porin LamB (TC 1.B.3) family. In terms of assembly, homotrimer formed of three 18-stranded antiparallel beta-barrels, containing three independent channels.

It is found in the cell outer membrane. It catalyses the reaction beta-maltose(in) = beta-maltose(out). Functionally, involved in the transport of maltose and maltodextrins. The protein is Maltoporin 1 of Klebsiella pneumoniae subsp. pneumoniae (strain ATCC 700721 / MGH 78578).